The primary structure comprises 90 residues: Small ribosomal subunit protein bS16 (90 aa).

The protein belongs to the bacterial ribosomal protein bS16 family.

In Listeria monocytogenes serotype 4b (strain F2365), this protein is Small ribosomal subunit protein bS16.